We begin with the raw amino-acid sequence, 185 residues long: MSVMPDHWIKERALKDGMISPFVDHKEGTGVLSYGLSSYGYDARLDNKFKIFANTHSVVVDPKNFSQDSFVDREGDFCIIPPNSFMLAKTVEYFNIPRDVMVVCVGKSTYARCGIVVNVTPLEPGWSGYVTLEFSNTSPLPVKVYAFEGACQFLFFSGKERCSKSYDEAGGKYMGQSDVTLPIIS.

DCTP is bound by residues 107-112 (KSTYAR), 131-133 (TLE), Gln152, Tyr166, and Gln176. Glu133 serves as the catalytic Proton donor/acceptor.

The protein belongs to the dCTP deaminase family. Homotrimer.

The catalysed reaction is dCTP + H2O + H(+) = dUTP + NH4(+). It participates in pyrimidine metabolism; dUMP biosynthesis; dUMP from dCTP (dUTP route): step 1/2. Its function is as follows. Catalyzes the deamination of dCTP to dUTP. This is dCTP deaminase from Anaplasma phagocytophilum (strain HZ).